The chain runs to 400 residues: S-adenosylmethionine synthase (400 aa).

An ATP-binding site is contributed by 136 to 141 (GTGSTD).

It belongs to the AdoMet synthase 2 family. Mg(2+) is required as a cofactor.

It carries out the reaction L-methionine + ATP + H2O = S-adenosyl-L-methionine + phosphate + diphosphate. It functions in the pathway amino-acid biosynthesis; S-adenosyl-L-methionine biosynthesis; S-adenosyl-L-methionine from L-methionine: step 1/1. Functionally, catalyzes the formation of S-adenosylmethionine from methionine and ATP. The polypeptide is S-adenosylmethionine synthase (Methanoregula boonei (strain DSM 21154 / JCM 14090 / 6A8)).